The sequence spans 250 residues: NAD(P)H-quinone oxidoreductase subunit K (250 aa).

Residues C60, C61, C125, and C156 each contribute to the [4Fe-4S] cluster site. Residues 230–250 (ELNTPEIDVSPASQSSSTYES) form a disordered region. Residues 240-250 (PASQSSSTYES) are compositionally biased toward polar residues.

The protein belongs to the complex I 20 kDa subunit family. As to quaternary structure, NDH-1 can be composed of about 15 different subunits; different subcomplexes with different compositions have been identified which probably have different functions. [4Fe-4S] cluster serves as cofactor.

Its subcellular location is the cellular thylakoid membrane. It carries out the reaction a plastoquinone + NADH + (n+1) H(+)(in) = a plastoquinol + NAD(+) + n H(+)(out). The enzyme catalyses a plastoquinone + NADPH + (n+1) H(+)(in) = a plastoquinol + NADP(+) + n H(+)(out). NDH-1 shuttles electrons from an unknown electron donor, via FMN and iron-sulfur (Fe-S) centers, to quinones in the respiratory and/or the photosynthetic chain. The immediate electron acceptor for the enzyme in this species is believed to be plastoquinone. Couples the redox reaction to proton translocation, and thus conserves the redox energy in a proton gradient. Cyanobacterial NDH-1 also plays a role in inorganic carbon-concentration. The polypeptide is NAD(P)H-quinone oxidoreductase subunit K (Prochlorococcus marinus (strain MIT 9313)).